The sequence spans 1012 residues: MLILVGSKQGTMSSLASPVSLGSLMGVSSSGRSHSGVRRVSFSRGNCKGRKRWHCLSLSVCRYSVTTTDFIADQGNSVSLDSNSNSSSSSKSGGDDGTGFVLKPPPKPVLKAPDNRMTHLGPSRTTGDVEERNKVIESLGEVLEKAEKLGSSKVNGDKNNGSVNKPVRNNANASPRTERPVNSAASLKSKTLKSVWRKGDSVASVQKVVKEVPKPSYNKNEEEKSQTRGGEKVVSQTRAPQPPSKPQPLKPQQPSKPQPALLSKPSIAPPPVKKPVVLRDKGAAETSVKSKEKKSPILIDKFASKKPVVDPLIAQAVLAPPKPGKAPSPGKFKDDFRKKGALAGGGRRRRILDDEDVIQDASELNVSIPGAATARKGRKWSKASRKAARLQAARDAAPVKVEILEVGDSGMLVEELAYCLATSEGEILGYLYSKGIKPDGVQTIDKDMVKMICKEYDVEVIDADPVKVEGLVKKREILDEDDLDKLKDRPPVITIMGHVDHGKTTLLDYIRKSKVAASEAGGITQGIGAYKVQVPFDGKTLPCVFLDTPGHEAFGAMRARGASVTDIAVIVVAADDGIRSQTNEAIAHAKAAGVPIVIAINKIDKDGANPERVMQELSSIGLMPEDWGGNTPMVPISALKGKNVDDLLETVMLVAELQELKANPDRSAKGTVIEAGLDKSKGPLATFIVQNGSLRRGDIVVCWRSFWKGRALFDDGGKRVDEATPSIPVQVIGLNNVPIAGDVFEVVESLDAARERAETRAESLRNERISAKAGDGKITLSSLASAVSSGKLSGLDLHQLNIILKVDLQGSIEAVRKALQVLPQENVTLKFLLEATGDVNTSDVDLAVASKAIIMGFNAXTPGSVKSYADNKAVEIRLYRVIYELIDDVRKAMEGLLEPVEEQLTIGSAVVRAVFSSGSGRVAGCMVTEGKVLKDCGIRVKRKGKIVHVGIIDSLRRVKEIVKEVNAGLECGLGLEDFDDWEEGDIIEPSTQLRRRGPLKRPQHQWQLLWRE.

The span at 75–102 shows a compositional bias: low complexity; it reads GNSVSLDSNSNSSSSSKSGGDDGTGFVL. Disordered stretches follow at residues 75–132, 147–294, and 319–340; these read GNSV…VEER, EKLG…KEKK, and APPK…RKKG. The span at 152 to 175 shows a compositional bias: polar residues; it reads SKVNGDKNNGSVNKPVRNNANASP. A compositionally biased stretch (low complexity) spans 183–194; the sequence is SAASLKSKTLKS. The span at 208–231 shows a compositional bias: basic and acidic residues; the sequence is VVKEVPKPSYNKNEEEKSQTRGGE. Positions 240–257 are enriched in pro residues; the sequence is PQPPSKPQPLKPQQPSKP. Residues 277 to 294 are compositionally biased toward basic and acidic residues; it reads VLRDKGAAETSVKSKEKK. Residues 488–661 form the tr-type G domain; it reads DRPPVITIMG…MLVAELQELK (174 aa). The tract at residues 497–504 is G1; sequence GHVDHGKT. Residue 497 to 504 participates in GTP binding; the sequence is GHVDHGKT. A G2 region spans residues 522–526; that stretch reads GITQG. Residues 547–550 are G3; it reads DTPG. GTP is bound by residues 547-551 and 601-604; these read DTPGH and NKID. The segment at 601–604 is G4; that stretch reads NKID. Residues 637 to 639 are G5; that stretch reads SAL.

Belongs to the TRAFAC class translation factor GTPase superfamily. Classic translation factor GTPase family. IF-2 subfamily.

The protein resides in the plastid. Its subcellular location is the chloroplast. Its function is as follows. One of the essential components for the initiation of protein synthesis. Protects formylmethionyl-tRNA from spontaneous hydrolysis and promotes its binding to the 30S ribosomal subunits. Also involved in the hydrolysis of GTP during the formation of the 70S ribosomal complex. This Phaseolus vulgaris (Kidney bean) protein is Translation initiation factor IF-2, chloroplastic (IF2CP).